Here is a 126-residue protein sequence, read N- to C-terminus: MSKEYMNDGSLSEKWKYRFNFYDQHGFPGFWGATPEYKAAFKALKVRQRLTIQMNFIAFFCSWIYLFVLGLWKKAIIVLLLGILSLFVGALIGVNILGIAVAAYVAVNTNKWFYEKEVKGLNTWSL.

This is an uncharacterized protein from Escherichia coli (strain K12).